The chain runs to 208 residues: Protein DEHYDRATION-INDUCED 19 homolog 6 (208 aa).

The tract at residues 151–190 (VDSPRRSEADAEGHGSSSSDDQKRREQGVMDDASKEELEE) is disordered. Basic and acidic residues-rich tracts occupy residues 153–163 (SPRRSEADAEG) and 170–190 (DDQK…ELEE).

This sequence belongs to the Di19 family.

In Oryza sativa subsp. japonica (Rice), this protein is Protein DEHYDRATION-INDUCED 19 homolog 6 (DI19-6).